The chain runs to 523 residues: Protein NAM8 (523 aa).

Positions 1 to 35 are disordered; sequence MSYKQTTYYPSRGNLVRNDSSPYTNTISSETNNSS. The span at 24 to 35 shows a compositional bias: low complexity; sequence TNTISSETNNSS. RRM domains lie at 54–145, 163–242, and 313–385; these read NQLY…WATS, CSIF…PTSG, and TTVF…WGRS. The tract at residues 239-260 is disordered; it reads PTSGQQQHVSGNNDYNRSSSSL. Polar residues predominate over residues 240 to 260; that stretch reads TSGQQQHVSGNNDYNRSSSSL.

Component of the U1 small nuclear ribonucleoprotein complex (U1 snRNP).

Functionally, component of the U1 small nuclear ribonucleoprotein complex (U1 snRNP) involved in the initiation of meiotic recombination. Involved in the formation of DSBs at recombination hot-spots through meiosis-specific splicing of REC107 pre-mRNA. Collaborates with MER1 to promote splicing of essential meiotic mRNAs REC10, AMA1, MER3, HFM1, SPO22 and PCH2. NAM8 interacts with the pre-mRNA downstream of the 5' splice site, in a region of non-conserved sequence and is required for efficient splicing of uncapped RNA precursor. In Saccharomyces cerevisiae (strain ATCC 204508 / S288c) (Baker's yeast), this protein is Protein NAM8.